Consider the following 255-residue polypeptide: 5'-nucleotidase SurE (255 aa).

A divalent metal cation contacts are provided by Asp8, Asp9, Ser40, and Asn93.

This sequence belongs to the SurE nucleotidase family. A divalent metal cation is required as a cofactor.

The protein localises to the cytoplasm. It catalyses the reaction a ribonucleoside 5'-phosphate + H2O = a ribonucleoside + phosphate. Nucleotidase that shows phosphatase activity on nucleoside 5'-monophosphates. The chain is 5'-nucleotidase SurE from Nitrobacter winogradskyi (strain ATCC 25391 / DSM 10237 / CIP 104748 / NCIMB 11846 / Nb-255).